We begin with the raw amino-acid sequence, 259 residues long: Imidazole glycerol phosphate synthase subunit HisF (259 aa).

Active-site residues include Asp-11 and Asp-130.

Belongs to the HisA/HisF family. In terms of assembly, heterodimer of HisH and HisF.

The protein resides in the cytoplasm. It catalyses the reaction 5-[(5-phospho-1-deoxy-D-ribulos-1-ylimino)methylamino]-1-(5-phospho-beta-D-ribosyl)imidazole-4-carboxamide + L-glutamine = D-erythro-1-(imidazol-4-yl)glycerol 3-phosphate + 5-amino-1-(5-phospho-beta-D-ribosyl)imidazole-4-carboxamide + L-glutamate + H(+). Its pathway is amino-acid biosynthesis; L-histidine biosynthesis; L-histidine from 5-phospho-alpha-D-ribose 1-diphosphate: step 5/9. In terms of biological role, IGPS catalyzes the conversion of PRFAR and glutamine to IGP, AICAR and glutamate. The HisF subunit catalyzes the cyclization activity that produces IGP and AICAR from PRFAR using the ammonia provided by the HisH subunit. The polypeptide is Imidazole glycerol phosphate synthase subunit HisF (Nitratidesulfovibrio vulgaris (strain DP4) (Desulfovibrio vulgaris)).